A 666-amino-acid chain; its full sequence is ESX-1 secretion-associated protein EspI (666 aa).

The span at 1–15 (MAADYDKLFRPHEGM) shows a compositional bias: basic and acidic residues. The interval 1 to 378 (MAADYDKLFR…ATKPPKVVSQ (378 aa)) is disordered. The segment covering 22–31 (AAQPFFDPSA) has biased composition (low complexity). Composition is skewed to pro residues over residues 64-80 (APPPPPPPPPPPPPTPM), 87-144 (PPSP…PAPT), and 188-205 (PAPPWAKMPIGEPPPAPS). Basic residues predominate over residues 222-231 (HSRRARRGHR). Over residues 284–297 (PTRPAPTEPPPSPS) the composition is skewed to pro residues. The span at 357 to 371 (PKVKKVKPQKPKATK) shows a compositional bias: basic residues. 424–431 (LKGGAGKT) serves as a coordination point for ATP.

In terms of biological role, required to repress ESX-1-mediated secretion under low ATP conditions. This function requires the ATP-binding motif. This is ESX-1 secretion-associated protein EspI from Mycobacterium tuberculosis (strain CDC 1551 / Oshkosh).